Consider the following 223-residue polypeptide: Neurotrophic factor BDNF precursor form (223 aa).

Positions 1–5 (SCMKA) are cleaved as a signal peptide. Residues 6–114 (APMKEVSIRG…AANMSMRVRR (109 aa)) constitute a propeptide that is removed on maturation. Asparagine 107 carries an N-linked (GlcNAc...) asparagine glycan. 2 disulfide bridges follow: cysteine 127-cysteine 194 and cysteine 172-cysteine 223.

Belongs to the NGF-beta family.

The protein resides in the secreted. Promotes the survival of neuronal populations that are all located either in the central nervous system or directly connected to it. The sequence is that of Neurotrophic factor BDNF precursor form (BDNF) from Charina bottae (Northern rubber boa).